Reading from the N-terminus, the 280-residue chain is Tryptophan synthase alpha chain (280 aa).

Residues E49 and D60 each act as proton acceptor in the active site.

The protein belongs to the TrpA family. As to quaternary structure, tetramer of two alpha and two beta chains.

The catalysed reaction is (1S,2R)-1-C-(indol-3-yl)glycerol 3-phosphate + L-serine = D-glyceraldehyde 3-phosphate + L-tryptophan + H2O. Its pathway is amino-acid biosynthesis; L-tryptophan biosynthesis; L-tryptophan from chorismate: step 5/5. In terms of biological role, the alpha subunit is responsible for the aldol cleavage of indoleglycerol phosphate to indole and glyceraldehyde 3-phosphate. This Corynebacterium glutamicum (strain R) protein is Tryptophan synthase alpha chain.